Reading from the N-terminus, the 492-residue chain is Citrate synthase, peroxisomal (492 aa).

Active-site residues include H307, H346, and D402. The tract at residues 469 to 492 (PAKVRSQDSYSSATTKRYSKVTSH) is disordered. Over residues 475–484 (QDSYSSATTK) the composition is skewed to polar residues.

This sequence belongs to the citrate synthase family.

It localises to the peroxisome. The catalysed reaction is oxaloacetate + acetyl-CoA + H2O = citrate + CoA + H(+). The protein operates within carbohydrate metabolism; tricarboxylic acid cycle; isocitrate from oxaloacetate: step 1/2. Functionally, peroxisomal protein involved in the cellular biosynthesis of citrate, and required primarily for cell growth and modulation of multicellular development. In Dictyostelium discoideum (Social amoeba), this protein is Citrate synthase, peroxisomal (cshA).